Here is a 510-residue protein sequence, read N- to C-terminus: D-alanine--D-alanyl carrier protein ligase (510 aa).

ATP is bound at residue 157-158 (TS). D-alanine is bound at residue D202. 297-302 (NTYGPT) is a binding site for ATP. V306 lines the D-alanine pocket. Residues D389 and K498 each coordinate ATP. K498 is a binding site for D-alanine.

It belongs to the ATP-dependent AMP-binding enzyme family. DltA subfamily.

It is found in the cytoplasm. The catalysed reaction is holo-[D-alanyl-carrier protein] + D-alanine + ATP = D-alanyl-[D-alanyl-carrier protein] + AMP + diphosphate. It functions in the pathway cell wall biogenesis; lipoteichoic acid biosynthesis. Catalyzes the first step in the D-alanylation of lipoteichoic acid (LTA), the activation of D-alanine and its transfer onto the D-alanyl carrier protein (Dcp) DltC. In an ATP-dependent two-step reaction, forms a high energy D-alanyl-AMP intermediate, followed by transfer of the D-alanyl residue as a thiol ester to the phosphopantheinyl prosthetic group of the Dcp. D-alanylation of LTA plays an important role in modulating the properties of the cell wall in Gram-positive bacteria, influencing the net charge of the cell wall. This chain is D-alanine--D-alanyl carrier protein ligase, found in Listeria monocytogenes serotype 4b (strain F2365).